The following is a 566-amino-acid chain: Acyl-CoA synthetase ALT10 (566 aa).

An AMP-binding site is contributed by 196 to 207 (MLFTSGTTGAPK). The segment at 473–551 (EVEHAALSHE…DAVHYNRTGK (79 aa)) is AMP-binding.

This sequence belongs to the ATP-dependent AMP-binding enzyme family.

It functions in the pathway mycotoxin biosynthesis. In terms of biological role, acyl-CoA synthetase; part of the gene cluster that mediates the biosynthesis of the host-selective toxins (HSTs) AAL-toxins, sphinganine-analog mycotoxins responsible for Alternaria stem canker on tomato by the tomato pathotype. The biosynthesis starts with the polyketide synthase ALT1-catalyzed C-16 carbon chain assembly from one starter acetyl-CoA unit with malonyl-CoA extender units. ALT1 also selectively transfers methyl groups at the first and the third cycle of chain elongation for AAL toxin. The C-16 polyketide chain is released from the enzyme by a nucleophilic attack of a carbanion, which is derived from R-carbon of glycin by decarboxylation, on the carbonyl carbon of polyketide acyl chain. This step is probably catalyzed by a pyridoxal 5'-phosphate-dependent aminoacyl transferase ALT4. The respective functions of the other enzymes encoded by the cluster have still to be elucidated. The sphingosine N-acyltransferase-like protein ALT7 seems not to act as a resistance/self-tolerance factor against the toxin in the toxin biosynthetic gene cluster, contrary to what is expected. The chain is Acyl-CoA synthetase ALT10 from Alternaria alternata (Alternaria rot fungus).